We begin with the raw amino-acid sequence, 473 residues long: Ribulose bisphosphate carboxylase large chain (473 aa).

Substrate is bound by residues asparagine 116 and threonine 166. The active-site Proton acceptor is the lysine 168. A substrate-binding site is contributed by lysine 170. Residues lysine 194, aspartate 196, and glutamate 197 each coordinate Mg(2+). At lysine 194 the chain carries N6-carboxylysine. The Proton acceptor role is filled by histidine 287. Positions 288, 320, and 372 each coordinate substrate.

This sequence belongs to the RuBisCO large chain family. Type I subfamily. As to quaternary structure, heterohexadecamer of 8 large chains and 8 small chains. Requires Mg(2+) as cofactor.

It catalyses the reaction 2 (2R)-3-phosphoglycerate + 2 H(+) = D-ribulose 1,5-bisphosphate + CO2 + H2O. The catalysed reaction is D-ribulose 1,5-bisphosphate + O2 = 2-phosphoglycolate + (2R)-3-phosphoglycerate + 2 H(+). Functionally, ruBisCO catalyzes two reactions: the carboxylation of D-ribulose 1,5-bisphosphate, the primary event in carbon dioxide fixation, as well as the oxidative fragmentation of the pentose substrate. Both reactions occur simultaneously and in competition at the same active site. This is Ribulose bisphosphate carboxylase large chain from Alkalilimnicola ehrlichii (strain ATCC BAA-1101 / DSM 17681 / MLHE-1).